The following is a 4243-amino-acid chain: Fibrocystin-L (4243 aa).

The N-terminal stretch at 1–20 (MGHLWLLGIWGLCGLLLCAA) is a signal peptide. Residues 21–4210 (DPSTDGSQII…KASTVGTYAQ (4190 aa)) are Extracellular-facing. IPT/TIG domains lie at 31–129 (PKVT…TCKG), 146–255 (PTIR…KMAY), and 270–361 (AEVT…ILEY). Thr-122 carries O-linked (GalNAc...) threonine glycosylation. Residues 337–492 (PGGRGLKLEV…NVYTEQQTGD (156 aa)) enclose the PA14 domain. O-linked (GalNAc...) threonine glycosylation occurs at Thr-445. IPT/TIG domains lie at 1067–1151 (PLVL…EFYF), 1155–1234 (SQIS…AFSY), 1240–1322 (PIIT…RDKL), 1330–1469 (LEVT…SFSY), 1566–1649 (PSIS…TLSN), 1659–1743 (PNID…TFSY), 1749–1828 (PYIT…NLTV), 1831–1910 (PPVA…LFTY), 1916–1997 (PFLR…VFEY), 1999–2085 (LNIQ…PFTY), and 2091–2176 (PLIT…DFLY). O-linked (GalNAc...) threonine glycans are attached at residues Thr-1803 and Thr-1839. The G8 1 domain maps to 2184 to 2304 (FSWGGKSPPE…VPVTWTRLAH (121 aa)). Thr-2320 carries an O-linked (GalNAc...) threonine glycan. PbH1 repeat units lie at residues 2508-2530 (THHL…FIED), 2566-2588 (NPNN…WYRM), 2665-2687 (GGAL…ETKR), and 2733-2756 (SEGL…ALGV). Positions 3036-3174 (SFWQSSRENN…HSIYKTKLSE (139 aa)) constitute a G8 2 domain. PbH1 repeat units lie at residues 3293-3315 (KGNA…RDST), 3355-3377 (TDGL…RIWG), 3416-3438 (GTNT…RIDG), 3471-3493 (PGCS…YFQT), and 3527-3548 (SKNV…NCSD). O-linked (GalNAc...) threonine glycosylation occurs at Thr-3736. Residues 4211–4231 (IMTVVISCLVGRMWLLEIFMA) traverse the membrane as a helical segment. Over 4232–4243 (AVSTLNITLRSY) the chain is Cytoplasmic.

It is found in the membrane. Its subcellular location is the cell projection. It localises to the stereocilium membrane. In terms of biological role, component of hair-cell stereocilia coat. Required for normal hearing. The chain is Fibrocystin-L (PKHD1L1) from Homo sapiens (Human).